The sequence spans 2322 residues: Protein sidekick homolog (2322 aa).

The first 26 residues, 1–26 (MNYRIFLLFCTTTVLWSVVSTQLVLG), serve as a signal peptide directing secretion. The Extracellular segment spans residues 27–2020 (KPPIFQNTGP…IPDDPFYTTW (1994 aa)). 3 consecutive Ig-like C2-type domains span residues 28 to 105 (PPIF…AAIS), 217 to 319 (PSLQ…AYLT), and 324 to 397 (PVLK…ADMS). 3 disulfides stabilise this stretch: C52–C94, C247–C301, and C345–C386. The N-linked (GlcNAc...) asparagine glycan is linked to N408. Ig-like C2-type domains follow at residues 450 to 545 (PFTS…VQVN) and 548 to 639 (SLIE…AMLQ). 2 disulfides stabilise this stretch: C481–C529 and C569–C623. N-linked (GlcNAc...) asparagine glycans are attached at residues N633 and N656. Fibronectin type-III domains are found at residues 646–752 (MPER…MPQQ), 757–854 (APRN…TAEG), 859–958 (APKN…TEED), 962–1056 (AVDE…VPPE), 1060–1155 (RPSM…TLQT), 1160–1255 (PSQR…TYES), 1260–1360 (SPRN…TLED), 1364–1458 (PPES…SSVR), 1464–1567 (APAP…TLPS), 1572–1672 (QPIS…VGYS), 1674–1774 (PKRN…LEDK), 1777–1873 (PVGV…SKDG), and 1908–2010 (QAKR…VPES). The tract at residues 732–762 (SNKHGPGKPSLPSSSVTMPQQPPSAAPRNVA) is disordered. N-linked (GlcNAc...) asparagine glycosylation is found at N808, N869, N933, and N1017. Residues 1040-1049 (GDGPVEETKF) are compositionally biased toward basic and acidic residues. The tract at residues 1040–1060 (GDGPVEETKFESGVPPELPGR) is disordered. N1108 carries an N-linked (GlcNAc...) asparagine glycan. The tract at residues 1139 to 1163 (GRGAPSEPSRTFETLQTNPETPSQR) is disordered. Residues 1146-1163 (PSRTFETLQTNPETPSQR) show a composition bias toward polar residues. N1615, N1677, and N1864 each carry an N-linked (GlcNAc...) asparagine glycan. Positions 1916–1965 (EETENGYVSQRPRRNEIRGAKSAAQTSASSNSNRPTHPIGEWITLRPTDG) are disordered. The segment covering 1935–1947 (AKSAAQTSASSNS) has biased composition (low complexity). A helical membrane pass occupies residues 2021–2041 (WFMALVAMAAFVLIVIIIAIL). The Cytoplasmic portion of the chain corresponds to 2042-2322 (CVTGSSAKYR…NLTAGFSSFV (281 aa)). Disordered stretches follow at residues 2081–2114 (NMTR…SVLG), 2167–2254 (YVVS…ADDI), and 2276–2322 (MVRA…SSFV). Polar residues predominate over residues 2092–2101 (PGTTQSWLSD). Low complexity predominate over residues 2207 to 2223 (PSSSGGSQPQGSPQQQQ). Positions 2227 to 2238 (DSFDEEDDVDDD) are enriched in acidic residues. 2 stretches are compositionally biased toward polar residues: residues 2282–2302 (LTNQ…STSE) and 2310–2322 (ATPN…SSFV).

This sequence belongs to the sidekick family.

The protein resides in the membrane. Functionally, cell adhesion protein. The protein is Protein sidekick homolog (rig-4) of Caenorhabditis briggsae.